A 366-amino-acid chain; its full sequence is Carbamoyl phosphate synthase small chain (366 aa).

Residues 1–174 (MQEIPAILVL…GERYTVDNPD (174 aa)) form a CPSase region. L-glutamine is bound by residues S48, G226, and G228. The Glutamine amidotransferase type-1 domain maps to 178–366 (HVVAFDYGIK…FTELMERLKN (189 aa)). The Nucleophile role is filled by C256. Residues L257, Q260, N298, G300, and F301 each contribute to the L-glutamine site. Catalysis depends on residues H340 and E342.

The protein belongs to the CarA family. In terms of assembly, composed of two chains; the small (or glutamine) chain promotes the hydrolysis of glutamine to ammonia, which is used by the large (or ammonia) chain to synthesize carbamoyl phosphate. Tetramer of heterodimers (alpha,beta)4.

The catalysed reaction is hydrogencarbonate + L-glutamine + 2 ATP + H2O = carbamoyl phosphate + L-glutamate + 2 ADP + phosphate + 2 H(+). It catalyses the reaction L-glutamine + H2O = L-glutamate + NH4(+). Its pathway is amino-acid biosynthesis; L-arginine biosynthesis; carbamoyl phosphate from bicarbonate: step 1/1. The protein operates within pyrimidine metabolism; UMP biosynthesis via de novo pathway; (S)-dihydroorotate from bicarbonate: step 1/3. In terms of biological role, small subunit of the glutamine-dependent carbamoyl phosphate synthetase (CPSase). CPSase catalyzes the formation of carbamoyl phosphate from the ammonia moiety of glutamine, carbonate, and phosphate donated by ATP, constituting the first step of 2 biosynthetic pathways, one leading to arginine and/or urea and the other to pyrimidine nucleotides. The small subunit (glutamine amidotransferase) binds and cleaves glutamine to supply the large subunit with the substrate ammonia. The chain is Carbamoyl phosphate synthase small chain from Chlorobaculum tepidum (strain ATCC 49652 / DSM 12025 / NBRC 103806 / TLS) (Chlorobium tepidum).